The sequence spans 418 residues: Protein fuzzy homolog (418 aa).

Belongs to the fuzzy family. As to quaternary structure, interacts with rsg1. Interacts with intu and wdpcp; fuz, intu and wdpcp probably form the core CPLANE (ciliogenesis and planar polarity effectors) complex.

The protein resides in the cytoplasm. Its subcellular location is the cytoskeleton. The protein localises to the cilium basal body. Functionally, probable planar cell polarity effector involved in cilium biogenesis. Proposed to function as core component of the CPLANE (ciliogenesis and planar polarity effectors) complex involved in the recruitment of peripheral IFT-A proteins to basal bodies. May regulate protein and membrane transport to the cilium. May control the organization of the apical actin cytoskeleton, which is essential for the normal orientation of elongating ciliary microtubules. The protein is Protein fuzzy homolog (fuz) of Xenopus tropicalis (Western clawed frog).